Consider the following 279-residue polypeptide: NADPH-dependent 7-cyano-7-deazaguanine reductase (279 aa).

A substrate-binding site is contributed by 86–88 (IES). 88 to 89 (SK) contacts NADPH. Cysteine 187 serves as the catalytic Thioimide intermediate. Aspartate 194 (proton donor) is an active-site residue. Position 226–227 (226–227 (HE)) interacts with substrate. NADPH is bound at residue 255–256 (RG).

This sequence belongs to the GTP cyclohydrolase I family. QueF type 2 subfamily. In terms of assembly, homodimer.

It localises to the cytoplasm. The catalysed reaction is 7-aminomethyl-7-carbaguanine + 2 NADP(+) = 7-cyano-7-deazaguanine + 2 NADPH + 3 H(+). It functions in the pathway tRNA modification; tRNA-queuosine biosynthesis. Its function is as follows. Catalyzes the NADPH-dependent reduction of 7-cyano-7-deazaguanine (preQ0) to 7-aminomethyl-7-deazaguanine (preQ1). This chain is NADPH-dependent 7-cyano-7-deazaguanine reductase, found in Glaesserella parasuis serovar 5 (strain SH0165) (Haemophilus parasuis).